The following is a 166-amino-acid chain: Endoribonuclease YbeY (166 aa).

Residues His-111, His-115, and His-121 each contribute to the Zn(2+) site. The interval 141–166 is disordered; it reads LGYPDPYAEDESADHPHSDTPSKDHE. Basic and acidic residues predominate over residues 153-166; the sequence is ADHPHSDTPSKDHE.

It belongs to the endoribonuclease YbeY family. The cofactor is Zn(2+).

The protein resides in the cytoplasm. In terms of biological role, single strand-specific metallo-endoribonuclease involved in late-stage 70S ribosome quality control and in maturation of the 3' terminus of the 16S rRNA. This Pseudomonas savastanoi pv. phaseolicola (strain 1448A / Race 6) (Pseudomonas syringae pv. phaseolicola (strain 1448A / Race 6)) protein is Endoribonuclease YbeY.